Consider the following 233-residue polypeptide: Cytochrome c biogenesis ATP-binding export protein CcmA (233 aa).

An ABC transporter domain is found at 17–233 (FAGEDLLCVR…AAGLFLEDEG (217 aa)). 49 to 56 (GPNGSGKS) is an ATP binding site.

Belongs to the ABC transporter superfamily. CcmA exporter (TC 3.A.1.107) family. As to quaternary structure, the complex is composed of two ATP-binding proteins (CcmA) and two transmembrane proteins (CcmB).

Its subcellular location is the cell inner membrane. It carries out the reaction heme b(in) + ATP + H2O = heme b(out) + ADP + phosphate + H(+). Its function is as follows. Part of the ABC transporter complex CcmAB involved in the biogenesis of c-type cytochromes; once thought to export heme, this seems not to be the case, but its exact role is uncertain. Responsible for energy coupling to the transport system. This Rhodospirillum rubrum (strain ATCC 11170 / ATH 1.1.1 / DSM 467 / LMG 4362 / NCIMB 8255 / S1) protein is Cytochrome c biogenesis ATP-binding export protein CcmA.